The chain runs to 246 residues: uncharacterized protein (246 aa).

Residues 204–243 (TTKLKKLEKEIHELPYMLINGKITYEEYKKRIREIEKEIG) adopt a coiled-coil conformation.

This is an uncharacterized protein from Aquifex aeolicus (strain VF5).